Consider the following 97-residue polypeptide: MKIRPLHDRVIIKRTEVEAKSAGGIVLTGSAAQKSTRGEVLAVGTGRILDNGEVKALAVKVGDKVIFNEGYGVKTEKLDGQEVLILSETDILAIVEE.

The protein belongs to the GroES chaperonin family. As to quaternary structure, heptamer of 7 subunits arranged in a ring. Interacts with the chaperonin GroEL.

The protein resides in the cytoplasm. In terms of biological role, together with the chaperonin GroEL, plays an essential role in assisting protein folding. The GroEL-GroES system forms a nano-cage that allows encapsulation of the non-native substrate proteins and provides a physical environment optimized to promote and accelerate protein folding. GroES binds to the apical surface of the GroEL ring, thereby capping the opening of the GroEL channel. This is Co-chaperonin GroES from Tolumonas auensis (strain DSM 9187 / NBRC 110442 / TA 4).